Reading from the N-terminus, the 677-residue chain is DNA gyrase subunit B, novobiocin-resistant (677 aa).

The interval 1–23 is disordered; the sequence is MTTYDTRTATDTRGSEQPGHVGT. Residues 154 to 295 are novobiocin-binding; the sequence is IWTDGHRWTQ…RLLSAEIALQ (142 aa). The Toprim domain maps to 456 to 570; the sequence is SEIFIVEGDS…EGHVHLSRPP (115 aa). Mg(2+)-binding residues include E462, D535, and D537.

Belongs to the type II topoisomerase GyrB family. In terms of assembly, heterotetramer, composed of two GyrA and two GyrB chains. In the heterotetramer, GyrA contains the active site tyrosine that forms a transient covalent intermediate with DNA, while GyrB binds cofactors and catalyzes ATP hydrolysis. It depends on Mg(2+) as a cofactor. Mn(2+) is required as a cofactor. Requires Ca(2+) as cofactor.

Its subcellular location is the cytoplasm. It carries out the reaction ATP-dependent breakage, passage and rejoining of double-stranded DNA.. A type II topoisomerase that negatively supercoils closed circular double-stranded (ds) DNA in an ATP-dependent manner to modulate DNA topology and maintain chromosomes in an underwound state. Negative supercoiling favors strand separation, and DNA replication, transcription, recombination and repair, all of which involve strand separation. Also able to catalyze the interconversion of other topological isomers of dsDNA rings, including catenanes and knotted rings. Type II topoisomerases break and join 2 DNA strands simultaneously in an ATP-dependent manner. The sequence is that of DNA gyrase subunit B, novobiocin-resistant from Streptomyces niveus (Streptomyces spheroides).